Reading from the N-terminus, the 94-residue chain is Co-chaperonin GroES (94 aa).

The protein belongs to the GroES chaperonin family. As to quaternary structure, heptamer of 7 subunits arranged in a ring. Interacts with the chaperonin GroEL.

The protein resides in the cytoplasm. In terms of biological role, together with the chaperonin GroEL, plays an essential role in assisting protein folding. The GroEL-GroES system forms a nano-cage that allows encapsulation of the non-native substrate proteins and provides a physical environment optimized to promote and accelerate protein folding. GroES binds to the apical surface of the GroEL ring, thereby capping the opening of the GroEL channel. The sequence is that of Co-chaperonin GroES from Clostridioides difficile (Peptoclostridium difficile).